A 335-amino-acid polypeptide reads, in one-letter code: N-acetyl-gamma-glutamyl-phosphate reductase (335 aa).

Residue C156 is part of the active site.

Belongs to the NAGSA dehydrogenase family. Type 1 subfamily.

It is found in the cytoplasm. The catalysed reaction is N-acetyl-L-glutamate 5-semialdehyde + phosphate + NADP(+) = N-acetyl-L-glutamyl 5-phosphate + NADPH + H(+). The protein operates within amino-acid biosynthesis; L-arginine biosynthesis; N(2)-acetyl-L-ornithine from L-glutamate: step 3/4. Functionally, catalyzes the NADPH-dependent reduction of N-acetyl-5-glutamyl phosphate to yield N-acetyl-L-glutamate 5-semialdehyde. The sequence is that of N-acetyl-gamma-glutamyl-phosphate reductase from Tolumonas auensis (strain DSM 9187 / NBRC 110442 / TA 4).